Reading from the N-terminus, the 225-residue chain is Membrane protein (225 aa).

Residues 1 to 20 (MSNETNCTLDFEQSVELFKE) lie on the Virion surface side of the membrane. A helical membrane pass occupies residues 21-41 (YNLFITAFLLFLTIILQYGYA). At 42–51 (TRIRFIYILK) the chain is on the intravirion side. The chain crosses the membrane as a helical span at residues 52-72 (MIVLWCFWPLNIAVGVISCIY). The Virion surface portion of the chain corresponds to 73–77 (PPNTG). The chain crosses the membrane as a helical span at residues 78 to 98 (GLVAAIILTVFACLSFVGYWI). Residues 99 to 225 (QSCRLFKRCR…VATGGSSLYT (127 aa)) are Intravirion-facing.

This sequence belongs to the gammacoronaviruses M protein family. Homomultimer. Interacts with envelope E protein in the budding compartment of the host cell, which is located between endoplasmic reticulum and the Golgi complex. Forms a complex with HE and S proteins. Interacts with nucleocapsid N protein. This interaction probably participates in RNA packaging into the virus.

The protein resides in the virion membrane. It is found in the host Golgi apparatus membrane. Its function is as follows. Component of the viral envelope that plays a central role in virus morphogenesis and assembly via its interactions with other viral proteins. This Avian infectious bronchitis virus (strain KB8523) (IBV) protein is Membrane protein.